Reading from the N-terminus, the 495-residue chain is Glycerol kinase (495 aa).

ADP is bound at residue threonine 11. 3 residues coordinate ATP: threonine 11, threonine 12, and serine 13. Threonine 11 is a binding site for sn-glycerol 3-phosphate. Arginine 15 is an ADP binding site. The sn-glycerol 3-phosphate site is built by arginine 81, glutamate 82, tyrosine 133, and aspartate 242. Residues arginine 81, glutamate 82, tyrosine 133, aspartate 242, and glutamine 243 each contribute to the glycerol site. The ADP site is built by threonine 264 and glycine 307. Residues threonine 264, glycine 307, glutamine 311, and glycine 408 each coordinate ATP. ADP-binding residues include glycine 408 and asparagine 412.

The protein belongs to the FGGY kinase family.

It carries out the reaction glycerol + ATP = sn-glycerol 3-phosphate + ADP + H(+). It functions in the pathway polyol metabolism; glycerol degradation via glycerol kinase pathway; sn-glycerol 3-phosphate from glycerol: step 1/1. Its activity is regulated as follows. Inhibited by fructose 1,6-bisphosphate (FBP). Functionally, key enzyme in the regulation of glycerol uptake and metabolism. Catalyzes the phosphorylation of glycerol to yield sn-glycerol 3-phosphate. The sequence is that of Glycerol kinase from Alkalilimnicola ehrlichii (strain ATCC BAA-1101 / DSM 17681 / MLHE-1).